Here is a 433-residue protein sequence, read N- to C-terminus: Ligand-dependent corepressor (433 aa).

Positions 1-147 (MQRMIQQFAA…GTREGFGHST (147 aa)) are disordered. The segment covering 13–34 (TSKTSSTQDPSQPNSTKNQSLP) has biased composition (polar residues). The span at 36–48 (ASPVTTSPTAATT) shows a compositional bias: low complexity. Position 42 is a phosphoserine (S42). The short motif at 53-57 (LSKLL) is the Interaction with nuclear receptors element. The residue at position 63 (S63) is a Phosphoserine. A compositionally biased stretch (polar residues) spans 88–110 (KKSPCASSTSLSHSPGCSSTQGN). Residue S249 is modified to Phosphoserine. A Glycyl lysine isopeptide (Lys-Gly) (interchain with G-Cter in SUMO2) cross-link involves residue K254. Residues 299–348 (QNRKSMLDAGPDSWGSDAEQSTSGQPYPTSDQEGDPGSKQPRKKRGRYRQ) are disordered. Residues 316–329 (AEQSTSGQPYPTSD) show a composition bias toward polar residues. The Nuclear localization signal signature appears at 339–345 (PRKKRGR). Residues 340 to 392 (RKKRGRYRQYNSEILEEAISVVMSGKMSVSKAQSIYGIPHSTLEYKVKERLGT) form the HTH psq-type domain. A DNA-binding region (H-T-H motif) is located at residues 368–388 (VSKAQSIYGIPHSTLEYKVKE). A disordered region spans residues 393–412 (LKNPPKKKMKLMRSEGPDVS). A Glycyl lysine isopeptide (Lys-Gly) (interchain with G-Cter in SUMO2) cross-link involves residue K414.

As to quaternary structure, interacts with ESR1 and ESR2 in the presence of estradiol. Interacts with CTBP1, HDAC3 and HDAC6. Component of a large corepressor complex that contains about 20 proteins, including CTBP1, CTBP2, HDAC1 and HDAC2. Detected in heart and kidney.

The protein resides in the nucleus. Repressor of ligand-dependent transcription activation by various nuclear repressors. Repressor of ligand-dependent transcription activation by ESR1, ESR2, NR3C1, PGR, RARA, RARB, RARG, RXRA and VDR. May act as transcription activator that binds DNA elements with the sequence 5'-CCCTATCGATCGATCTCTACCT-3'. In Mus musculus (Mouse), this protein is Ligand-dependent corepressor (Lcor).